The primary structure comprises 361 residues: Phosphoribosylformylglycinamidine cyclo-ligase (361 aa).

It belongs to the AIR synthase family.

The protein localises to the cytoplasm. It carries out the reaction 2-formamido-N(1)-(5-O-phospho-beta-D-ribosyl)acetamidine + ATP = 5-amino-1-(5-phospho-beta-D-ribosyl)imidazole + ADP + phosphate + H(+). It functions in the pathway purine metabolism; IMP biosynthesis via de novo pathway; 5-amino-1-(5-phospho-D-ribosyl)imidazole from N(2)-formyl-N(1)-(5-phospho-D-ribosyl)glycinamide: step 2/2. In Bartonella henselae (strain ATCC 49882 / DSM 28221 / CCUG 30454 / Houston 1) (Rochalimaea henselae), this protein is Phosphoribosylformylglycinamidine cyclo-ligase.